Here is a 410-residue protein sequence, read N- to C-terminus: Zinc finger protein 322 (410 aa).

8 consecutive C2H2-type zinc fingers follow at residues 81–103 (YRCD…QRIH), 109–131 (YKCS…QRTH), 137–159 (YTCD…QRSH), 165–187 (YLCN…RRTH), 193–215 (FKCL…QRTH), 221–243 (YKCN…KRVH), 249–271 (YKCG…QRVH), and 277–299 (YKCL…QATH). The segment at 303 to 325 (FKCLEYEKSFNCSSDFIVHQRIH) adopts a C2H2-type 9; degenerate zinc-finger fold. Residues 361-383 (YKYSVCDKTFHHSSALLQHQTVH) form a C2H2-type 10; degenerate zinc finger. At serine 400 the chain carries Phosphoserine.

This sequence belongs to the krueppel C2H2-type zinc-finger protein family. Interacts with POU5F1.

The protein resides in the nucleus. Its subcellular location is the cytoplasm. Functionally, transcriptional activator. Important for maintenance of pluripotency in embryonic stem cells. Binds directly to the POU5F1 distal enhancer and the NANOG proximal promoter, and enhances expression of both genes. Can also bind to numerous other gene promoters and regulates expression of many other pluripotency factors, either directly or indirectly. Promotes inhibition of MAPK signaling during embryonic stem cell differentiation. This is Zinc finger protein 322 (Znf322) from Mus musculus (Mouse).